The primary structure comprises 420 residues: Trophoblast glycoprotein (420 aa).

The first 34 residues, 1-34, serve as a signal peptide directing secretion; it reads MPGGCSRGPAAGDGRLRLARLALVLLGWVSSSSS. Residues 35–355 are Extracellular-facing; sequence TSSASSSSSS…PILPPSLQTS (321 aa). The region spanning 53-91 is the LRRNT domain; the sequence is SAQPPLPDQCPALCECSEAARTVKCVNRNLTEVPTDLPL. Intrachain disulfides connect cysteine 62–cysteine 68 and cysteine 66–cysteine 77. An N-linked (GlcNAc...) asparagine glycan is attached at asparagine 81. LRR repeat units lie at residues 92-113, 116-139, 141-163, 172-204, 209-232, 233-255, and 256-275; these read YVRN…AFAR, PLAE…GAFE, LPSL…FAFS, PSPL…AALV, LQGL…VLAQ, LPSL…VSFR, and NLTH…VLHN. N-linked (GlcNAc...) asparagine glycosylation occurs at asparagine 124. The N-linked (GlcNAc...) asparagine glycan is linked to asparagine 275. An LRRCT domain is found at 283–346; the sequence is GLPHVRVFLD…LNSADLDCDP (64 aa). Intrachain disulfides connect cysteine 298–cysteine 323 and cysteine 300–cysteine 344. A helical membrane pass occupies residues 356-376; that stretch reads YVFLGIVLALIGAIFLLVLYL. Topologically, residues 377–420 are cytoplasmic; that stretch reads NRKGIKKWMHNIRDACRDHMEGYHYRYEINADPRLTNLSSNSDV. A Phosphoserine modification is found at serine 418.

Highly glycosylated.

The protein localises to the cell membrane. Its function is as follows. May function as an inhibitor of Wnt/beta-catenin signaling by indirectly interacting with LRP6 and blocking Wnt3a-dependent LRP6 internalization. In Macaca fascicularis (Crab-eating macaque), this protein is Trophoblast glycoprotein (TPBG).